A 67-amino-acid polypeptide reads, in one-letter code: DNA-directed RNA polymerase subunit omega (67 aa).

It belongs to the RNA polymerase subunit omega family. In terms of assembly, the RNAP catalytic core consists of 2 alpha, 1 beta, 1 beta' and 1 omega subunit. When a sigma factor is associated with the core the holoenzyme is formed, which can initiate transcription.

It carries out the reaction RNA(n) + a ribonucleoside 5'-triphosphate = RNA(n+1) + diphosphate. In terms of biological role, promotes RNA polymerase assembly. Latches the N- and C-terminal regions of the beta' subunit thereby facilitating its interaction with the beta and alpha subunits. This is DNA-directed RNA polymerase subunit omega from Moorella thermoacetica (strain ATCC 39073 / JCM 9320).